Reading from the N-terminus, the 367-residue chain is Putative threonine-phosphate decarboxylase (367 aa).

Residues 12 to 13, asparagine 29, and asparagine 152 each bind O-phospho-L-threonine; that span reads HG. Lysine 213 is subject to N6-(pyridoxal phosphate)lysine. O-phospho-L-threonine is bound by residues arginine 320 and arginine 334.

This sequence belongs to the class-II pyridoxal-phosphate-dependent aminotransferase family. Pyridoxal 5'-phosphate is required as a cofactor.

The catalysed reaction is O-phospho-L-threonine + H(+) = (R)-1-aminopropan-2-yl phosphate + CO2. The protein operates within cofactor biosynthesis; adenosylcobalamin biosynthesis. Its function is as follows. Decarboxylates L-threonine-O-3-phosphate to yield (R)-1-amino-2-propanol O-2-phosphate, the precursor for the linkage between the nucleotide loop and the corrin ring in cobalamin. The chain is Putative threonine-phosphate decarboxylase (cobD) from Caldanaerobacter subterraneus subsp. tengcongensis (strain DSM 15242 / JCM 11007 / NBRC 100824 / MB4) (Thermoanaerobacter tengcongensis).